Reading from the N-terminus, the 321-residue chain is Mitochondrial thiamine pyrophosphate carrier 1 (321 aa).

Solcar repeat units lie at residues 12 to 110, 121 to 207, and 216 to 311; these read GSRQ…ISQM, PSSA…LKPV, and PLGS…AMGI. Helical transmembrane passes span 17-38, 91-107, 127-147, 182-199, 213-231, and 286-303; these read VVVA…LDVI, LLYL…YTNI, FISG…LDLL, GLGA…LFFA, LPLP…ASVV, and GLTV…VTMW.

It belongs to the mitochondrial carrier (TC 2.A.29) family.

Its subcellular location is the mitochondrion inner membrane. Its function is as follows. Mitochondrial transporter that mediates uptake of thiamine pyrophosphate (ThPP) into mitochondria. The protein is Mitochondrial thiamine pyrophosphate carrier 1 (TPC1) of Phaeosphaeria nodorum (strain SN15 / ATCC MYA-4574 / FGSC 10173) (Glume blotch fungus).